The sequence spans 281 residues: Diaminopimelate epimerase (281 aa).

3 residues coordinate substrate: Asn-13, Gln-46, and Asn-66. Residue Cys-75 is the Proton donor of the active site. Substrate-binding positions include 76-77 (GN), Asn-160, Asn-193, and 211-212 (ER). Cys-220 functions as the Proton acceptor in the catalytic mechanism. 221–222 (GT) is a binding site for substrate.

This sequence belongs to the diaminopimelate epimerase family. Homodimer.

It localises to the cytoplasm. The enzyme catalyses (2S,6S)-2,6-diaminopimelate = meso-2,6-diaminopimelate. The protein operates within amino-acid biosynthesis; L-lysine biosynthesis via DAP pathway; DL-2,6-diaminopimelate from LL-2,6-diaminopimelate: step 1/1. In terms of biological role, catalyzes the stereoinversion of LL-2,6-diaminopimelate (L,L-DAP) to meso-diaminopimelate (meso-DAP), a precursor of L-lysine and an essential component of the bacterial peptidoglycan. The polypeptide is Diaminopimelate epimerase (Acinetobacter baylyi (strain ATCC 33305 / BD413 / ADP1)).